The primary structure comprises 49 residues: DNA-directed RNA polymerase subunit Rpo12 (49 aa).

The Zn(2+) site is built by Cys11, Cys27, and Cys30.

Belongs to the archaeal Rpo12/eukaryotic RPC10 RNA polymerase subunit family. In terms of assembly, part of the RNA polymerase complex. Zn(2+) is required as a cofactor.

The protein resides in the cytoplasm. The catalysed reaction is RNA(n) + a ribonucleoside 5'-triphosphate = RNA(n+1) + diphosphate. DNA-dependent RNA polymerase (RNAP) catalyzes the transcription of DNA into RNA using the four ribonucleoside triphosphates as substrates. This Pyrococcus horikoshii (strain ATCC 700860 / DSM 12428 / JCM 9974 / NBRC 100139 / OT-3) protein is DNA-directed RNA polymerase subunit Rpo12.